A 602-amino-acid polypeptide reads, in one-letter code: Isocitrate dehydrogenase kinase/phosphatase (602 aa).

ATP-binding positions include 325-331 and lysine 346; that span reads APGIKGM. Aspartate 381 is an active-site residue.

This sequence belongs to the AceK family.

The protein localises to the cytoplasm. The catalysed reaction is L-seryl-[isocitrate dehydrogenase] + ATP = O-phospho-L-seryl-[isocitrate dehydrogenase] + ADP + H(+). In terms of biological role, bifunctional enzyme which can phosphorylate or dephosphorylate isocitrate dehydrogenase (IDH) on a specific serine residue. This is a regulatory mechanism which enables bacteria to bypass the Krebs cycle via the glyoxylate shunt in response to the source of carbon. When bacteria are grown on glucose, IDH is fully active and unphosphorylated, but when grown on acetate or ethanol, the activity of IDH declines drastically concomitant with its phosphorylation. This chain is Isocitrate dehydrogenase kinase/phosphatase, found in Paracidovorax citrulli (strain AAC00-1) (Acidovorax citrulli).